We begin with the raw amino-acid sequence, 332 residues long: D-lactate dehydrogenase (332 aa).

Residues 155–156 (RI), Asp-175, 206–207 (VP), Asn-212, and 233–235 (FAR) each bind NAD(+). Catalysis depends on residues Arg-235 and Glu-264. His-296 serves as the catalytic Proton donor.

Belongs to the D-isomer specific 2-hydroxyacid dehydrogenase family. Homodimer.

The enzyme catalyses (R)-lactate + NAD(+) = pyruvate + NADH + H(+). In Lactiplantibacillus pentosus (Lactobacillus pentosus), this protein is D-lactate dehydrogenase.